Here is a 244-residue protein sequence, read N- to C-terminus: MVATVKRTIRIKTQQHILPEVPPVENFPVRQWSIEIVLLDDEGKEIPATIFDKVIYHLHPTFANPNRTFTDPPFRIEEQGWGGFPLDISVFLLEKAGERKIPHDLNFLQESYEVEHVIQIPLNKPLLTEELAKSGSTEETTANTGTIGKRRTTTNTTAEPKAKRAKTGSASTVKGSVDLEKLAFGLTKLNEDDLVGVVQMVTDNKTPEMNVTNNVEEGEFIIDLYSLPEGLLKSLWDYVKKNTE.

In terms of domain architecture, YEATS spans 1-134; the sequence is MVATVKRTIR…PLLTEELAKS (134 aa). Acylated histone binding stretches follow at residues 59 to 61 and 81 to 83; these read HPT and WGG. The tract at residues 133–169 is disordered; sequence KSGSTEETTANTGTIGKRRTTTNTTAEPKAKRAKTGS. Residues 143–157 show a composition bias toward low complexity; the sequence is NTGTIGKRRTTTNTT. A Glycyl lysine isopeptide (Lys-Gly) (interchain with G-Cter in ubiquitin) cross-link involves residue Lys181.

It belongs to the TAF14 family. The 1.2 MDa TFIID complex is composed of TATA binding protein (TBP) and the 14 TBP-associated factors. One copy of each TAF1, TAF2, TAF3, TAF7, TAF8, TAF11, TAF13, two copies of each TAF4, TAF5, TAF6, TAF9, TAF10, TAF12, and three copies of TAF14. TFIIF is composed of three different subunits: TFG1/RAP74, TFG2/RAP30 and TAF14. Component of the SWI/SNF global transcription activator complex. The 1.14 MDa SWI/SNF complex is composed of 11 different subunits: one copy each of SWI1, SNF2/SWI2, SNF5, SNF12/SWP73, ARP7/SWP61, ARP9/SWP59; two copies each of SWI3, SNF6, SNF11, SWP82; and three copies of TAF14/SWP29. Component of the chromatin-remodeling INO80 complex, at least composed of ARP4, ARP5, ARP8, RVB1, RVB2, TAF14, NHP10, IES1, IES3, IES4, IES6, ACT1, IES2, IES5 and INO80. Component of the NuA3 histone acetyltransferase (HAT) complex. The NuA3 HAT complex has 2 functionally distinct forms that participate in transcription. The NuA3b HAT complex contains an additional subunit, PDP3.

Its subcellular location is the nucleus. Functionally, functions as a component of the DNA-binding general transcription factor complex TFIID, the RNA polymerase II associated general transcription factor complex TFIIF, and the chromatin-remodeling complex SWI/SNF. Binding of TFIID to a promoter (with or without TATA element) is the initial step in preinitiation complex (PIC) formation. TFIID plays a key role in the regulation of gene expression by RNA polymerase II through different activities such as transcription activator interaction, core promoter recognition and selectivity, TFIIA and TFIIB interaction, chromatin modification (histone acetylation by TAF1), facilitation of DNA opening and initiation of transcription. TFIIF is essential for the initiation of transcription by RNA polymerase II. TFIIF functions include the recruitment of RNA polymerase II to the promoter bound DNA-TBP-TFIIB complex, decreasing the affinity of RNA polymerase II for non-specific DNA, allowing for the subsequent recruitment of TFIIE and TFIIH, and facilitating RNA polymerase II elongation. TAF14 acts as a chromatin reader that specifically recognizes and binds histones that are acylated. Recognizes and binds histone H3 acetylated or crotonylated at 'Lys-9' (H3K9ac and H3K9cr, respectively), with some preference for crotonylated lysine. Component of the SWI/SNF complex, an ATP-dependent chromatin-remodeling complex, is required for the positive and negative regulation of gene expression of a large number of genes. It changes chromatin structure by altering DNA-histone contacts within a nucleosome, leading eventually to a change in nucleosome position, thus facilitating or repressing binding of gene-specific transcription factors. Component of the NuA3 histone acetyltransferase complex. The NuA3 HAT complex has 2 functionally distinct forms. NuA3a binds H3K4me3, through the PHD finger of YNG1, and acetylates H3K14 at the promoter region of actively transcribed genes to promote transcription initiation. NuA3b binds H3K36me3 at the coding regions of actively transcribed genes, through the PWWP domain of PDP3, and coordinates transcription elongation. Does not bind DNA. The polypeptide is Transcription initiation factor TFIID subunit 14 (TAF14) (Saccharomyces cerevisiae (strain ATCC 204508 / S288c) (Baker's yeast)).